The primary structure comprises 382 residues: Lipid-A-disaccharide synthase (382 aa).

The protein belongs to the LpxB family.

It carries out the reaction 2-N,3-O-bis[(3R)-3-hydroxytetradecanoyl]-alpha-D-glucosaminyl 1-phosphate + UDP-2-N,3-O-bis[(3R)-3-hydroxytetradecanoyl]-alpha-D-glucosamine = lipid A disaccharide (E. coli) + UDP + H(+). It catalyses the reaction a lipid X + a UDP-2-N,3-O-bis[(3R)-3-hydroxyacyl]-alpha-D-glucosamine = a lipid A disaccharide + UDP + H(+). It participates in glycolipid biosynthesis; lipid IV(A) biosynthesis; lipid IV(A) from (3R)-3-hydroxytetradecanoyl-[acyl-carrier-protein] and UDP-N-acetyl-alpha-D-glucosamine: step 5/6. Condensation of UDP-2,3-diacylglucosamine and 2,3-diacylglucosamine-1-phosphate to form lipid A disaccharide, a precursor of lipid A, a phosphorylated glycolipid that anchors the lipopolysaccharide to the outer membrane of the cell. The protein is Lipid-A-disaccharide synthase of Shigella flexneri serotype 5b (strain 8401).